A 367-amino-acid chain; its full sequence is Glutamate 5-kinase (367 aa).

An ATP-binding site is contributed by K8. Substrate contacts are provided by S49, D136, and N148. ATP-binding positions include 168-169 and 210-216; these read TD and TGGMVTK. The PUA domain maps to 275–353; sequence AGKLYLDEGA…REISTILGYA (79 aa).

It belongs to the glutamate 5-kinase family.

Its subcellular location is the cytoplasm. The enzyme catalyses L-glutamate + ATP = L-glutamyl 5-phosphate + ADP. The protein operates within amino-acid biosynthesis; L-proline biosynthesis; L-glutamate 5-semialdehyde from L-glutamate: step 1/2. Its function is as follows. Catalyzes the transfer of a phosphate group to glutamate to form L-glutamate 5-phosphate. The protein is Glutamate 5-kinase of Nostoc punctiforme (strain ATCC 29133 / PCC 73102).